Here is a 212-residue protein sequence, read N- to C-terminus: Uridine kinase (212 aa).

12 to 19 (GGSGGGKT) contacts ATP.

It belongs to the uridine kinase family.

The protein resides in the cytoplasm. It carries out the reaction uridine + ATP = UMP + ADP + H(+). It catalyses the reaction cytidine + ATP = CMP + ADP + H(+). It functions in the pathway pyrimidine metabolism; CTP biosynthesis via salvage pathway; CTP from cytidine: step 1/3. The protein operates within pyrimidine metabolism; UMP biosynthesis via salvage pathway; UMP from uridine: step 1/1. The protein is Uridine kinase of Streptococcus pneumoniae serotype 19F (strain G54).